A 290-amino-acid polypeptide reads, in one-letter code: 4-hydroxy-tetrahydrodipicolinate synthase (290 aa).

Position 44 (Thr-44) interacts with pyruvate. Residue Tyr-132 is the Proton donor/acceptor of the active site. The active-site Schiff-base intermediate with substrate is Lys-160. Ile-202 contacts pyruvate.

Belongs to the DapA family. As to quaternary structure, homotetramer; dimer of dimers.

The protein localises to the cytoplasm. It carries out the reaction L-aspartate 4-semialdehyde + pyruvate = (2S,4S)-4-hydroxy-2,3,4,5-tetrahydrodipicolinate + H2O + H(+). The protein operates within amino-acid biosynthesis; L-lysine biosynthesis via DAP pathway; (S)-tetrahydrodipicolinate from L-aspartate: step 3/4. Functionally, catalyzes the condensation of (S)-aspartate-beta-semialdehyde [(S)-ASA] and pyruvate to 4-hydroxy-tetrahydrodipicolinate (HTPA). In Pelobacter propionicus (strain DSM 2379 / NBRC 103807 / OttBd1), this protein is 4-hydroxy-tetrahydrodipicolinate synthase.